The primary structure comprises 519 residues: MGLDWPQAWLLGLPIAVVYGSLALFTSILHNVFLLYYVDTFVSVYKINKVSFWVGETVFLLWNSFNDPLFGWLSDRQLLSSQPRSGAGLSSRDVVLTRVRALGWHGPLLALSFLAFWVPWAPAGLQFLLCLCLYDGFLTLVDLHHHALLADLALSSHDRTHLNFYCSLFSAAGSLSVFASYAFWNKEDFSSFRAFCVVLAAGSGLGFLGTTQLLKRQIEATRRDRGCPGLDLDGGVCEEEPPVGGEEAGNITLGQYLRQLARHQNFLWFVGMDLVQVFHCHFNSNFFPLFLEHLLSDHISLSTGSFLLGISYVAPHLNNLYFLPLCRRWGVYAVVRGLFLLKLSLSLLMLLAGPDHPGLLCFFIASNRVFTEGTCKLLTLVVTDLVDEDLVLNHRKQAASALLFGMVALVTKPGQTFAPLLGTWLLCFYTGHDLFQQSPMTPVGSVRPWPELPAPAPAPAQAPTLRQGCFYLLVFVPITCALLQLFTWSQFTLHGRRLRTVKAQRQNLAQIHTLNIKMV.

Residues 1–11 (MGLDWPQAWLL) lie on the Extracellular side of the membrane. Residues 12 to 43 (GLPIAVVYGSLALFTSILHNVFLLYYVDTFVS) traverse the membrane as a helical segment. Over 44–55 (VYKINKVSFWVG) the chain is Cytoplasmic. Residues 56 to 74 (ETVFLLWNSFNDPLFGWLS) form a helical membrane-spanning segment. Over 75–100 (DRQLLSSQPRSGAGLSSRDVVLTRVR) the chain is Extracellular. A helical transmembrane segment spans residues 101 to 118 (ALGWHGPLLALSFLAFWV). The Cytoplasmic segment spans residues 119–126 (PWAPAGLQ). The chain crosses the membrane as a helical span at residues 127-151 (FLLCLCLYDGFLTLVDLHHHALLAD). The Extracellular segment spans residues 152 to 155 (LALS). Residues 156–179 (SHDRTHLNFYCSLFSAAGSLSVFA) form a helical membrane-spanning segment. The Cytoplasmic portion of the chain corresponds to 180 to 191 (SYAFWNKEDFSS). The chain crosses the membrane as a helical span at residues 192–223 (FRAFCVVLAAGSGLGFLGTTQLLKRQIEATRR). The Extracellular portion of the chain corresponds to 224–264 (DRGCPGLDLDGGVCEEEPPVGGEEAGNITLGQYLRQLARHQ). The N-linked (GlcNAc...) asparagine glycan is linked to Asn-250. The helical transmembrane segment at 265 to 292 (NFLWFVGMDLVQVFHCHFNSNFFPLFLE) threads the bilayer. Over 293 to 305 (HLLSDHISLSTGS) the chain is Cytoplasmic. The helical transmembrane segment at 306–325 (FLLGISYVAPHLNNLYFLPL) threads the bilayer. The Extracellular segment spans residues 326–330 (CRRWG). The chain crosses the membrane as a helical span at residues 331–350 (VYAVVRGLFLLKLSLSLLML). Topologically, residues 351-358 (LAGPDHPG) are cytoplasmic. Residues 359 to 393 (LLCFFIASNRVFTEGTCKLLTLVVTDLVDEDLVLN) traverse the membrane as a helical segment. Over 394–402 (HRKQAASAL) the chain is Extracellular. Residues 403–429 (LFGMVALVTKPGQTFAPLLGTWLLCFY) form a helical membrane-spanning segment. Residues 430–468 (TGHDLFQQSPMTPVGSVRPWPELPAPAPAPAQAPTLRQG) lie on the Cytoplasmic side of the membrane. The chain crosses the membrane as a helical span at residues 469–487 (CFYLLVFVPITCALLQLFT). At 488–519 (WSQFTLHGRRLRTVKAQRQNLAQIHTLNIKMV) the chain is on the extracellular side.

It is found in the cell membrane. The chain is Transmembrane protein 180 from Mus musculus (Mouse).